The primary structure comprises 351 residues: sn-glycerol-3-phosphate import ATP-binding protein UgpC (351 aa).

The region spanning 4–234 is the ABC transporter domain; that stretch reads ITLKDLVKSY…PATLFVAGFI (231 aa). Residue 36–43 participates in ATP binding; it reads GPSGCGKS.

The protein belongs to the ABC transporter superfamily. sn-glycerol-3-phosphate importer (TC 3.A.1.1.3) family. The complex is composed of two ATP-binding proteins (UgpC), two transmembrane proteins (UgpA and UgpE) and a solute-binding protein (UgpB).

The protein localises to the cell inner membrane. It carries out the reaction sn-glycerol 3-phosphate(out) + ATP + H2O = sn-glycerol 3-phosphate(in) + ADP + phosphate + H(+). Part of the ABC transporter complex UgpBAEC involved in sn-glycerol-3-phosphate (G3P) import. Responsible for energy coupling to the transport system. This is sn-glycerol-3-phosphate import ATP-binding protein UgpC from Ruegeria sp. (strain TM1040) (Silicibacter sp.).